A 1254-amino-acid chain; its full sequence is MELAAWCGWGLLLALLSPGASGTQVCTGTDMKLRLPASPETHLDIVRHLYQGCQVVQGNLELTYLPANATLSFLQDIQEVQGYMLIAHSQVRHVPLQRLRIVRGTQLFEDKYALAVLDNRDPLDNVTTATGRTPEGLRELQLRSLTEILKGGVLIRGNPQLCYQDTVLWKDVFRKNNQLAPVDIDTNRSRACPPCAPACKDNHCWGASPEDCQTLTGTIAPRAVPAARARLPTDCCHEQCAAGCTGPKHSDCLACLHFNHSGICELHCPALVTYNTDTFESMPNPEGRYTFGASCVTTCPYNYLSTEVGSCTLVCPLNNQEVTAEDGTQRCEKCSKSCARVCYGLGMEHLRGARAITSANIQEFAGCKKIFGSLAFLPESFDGNPSSGIAPLTPEQLQVFETLEEITGYLYISAWPDSLHDLSVFQNLRVIRGRVLHDGAYSLALQGLGIRWLGLRSLRELGSGLVLIHRNTHLCFVHTVPWDQLFRNPHQALLHSGNPSEEECGLKDFACYPLCAHGHCWGPGPTQCVNCSHFLRGQECVKECRVWKGLPREYVNGKHCLPCHPECQPQNSTETCTGSEADQCTACPHYKDSPFCVARCPSGVKPDLSYMPIWKYPDEEGMCQPCPINCTHSCVDLDERGCPAEQRASPATSIIATVVGILLFLVIGVVVGILIKRRRQKIRKYTMRRLLQETELVEPLTPSGAMPNQAQMRILKETELRKVKVLGSGAFGTVYKGIWIPDGENVKIPVAIKVLRENTSPKANKEILDEAYVMAGLGSPYVSRLLGICLTSTVQLVTQLMPYGCLLDHVREHRGRLGSQDLLNWCVQIAKGMSYLEDVRLVHRDLAARNVLVKSPNHVKITDFGLARLLDIDETEYHADGGKVPIKWIALESILRRRFTHQSDVWSYGVTVWELMTFGAKPYDGIPAREIPDLLEKGERLPQPPICTIDVYMIMVKCWMIDSECRPRFRELVSEFSRMARDPQRFVVIQNEDLGPSSPLDSTFYRSLLEDDDMGDLVDAEEYLVPQQGFFFPDPAPGAGSTAHRRHRSSSTRSGGGELTLGMEPSGEEPPRSPLAPSEGAGSDVFEGELGMGATKGPQSISPRDLSPLQRYSEDPTLPLPTETDGYVAPLACSPQPEYVNQPEVRPQPPLTPEGPLPPVRPAGATLERPKTLSPGKNGVVKDVFTFGGAVENPEYLVPRGGSASQPHPPALCPAFDNLYYWDQDPSERGSPPNTFEGTPTAENPEYLGLDVPV.

The first 22 residues, 1 to 22 (MELAAWCGWGLLLALLSPGASG), serve as a signal peptide directing secretion. The Extracellular portion of the chain corresponds to 23–652 (TQVCTGTDMK…PAEQRASPAT (630 aa)). The cysteines at positions 26 and 53 are disulfide-linked. Residues Asn68, Asn125, and Asn187 are each glycosylated (N-linked (GlcNAc...) asparagine). 14 disulfide bridges follow: Cys162-Cys192, Cys195-Cys204, Cys199-Cys212, Cys236-Cys244, Cys240-Cys252, Cys255-Cys264, Cys268-Cys295, Cys299-Cys311, Cys315-Cys331, Cys334-Cys338, Cys342-Cys367, Cys475-Cys504, Cys511-Cys520, and Cys515-Cys528. A glycan (N-linked (GlcNAc...) asparagine) is linked at Asn259. Asn530 carries N-linked (GlcNAc...) asparagine glycosylation. 8 disulfides stabilise this stretch: Cys531-Cys540, Cys544-Cys560, Cys563-Cys576, Cys567-Cys584, Cys587-Cys596, Cys600-Cys623, Cys626-Cys634, and Cys630-Cys642. An N-linked (GlcNAc...) asparagine glycan is attached at Asn571. The N-linked (GlcNAc...) asparagine glycan is linked to Asn629. The chain crosses the membrane as a helical span at residues 653–675 (SIIATVVGILLFLVIGVVVGILI). Residues 676 to 689 (KRRRQKIRKYTMRR) are required for interaction with KPNB1 and EEA1. The Nuclear localization signal motif lies at 676–689 (KRRRQKIRKYTMRR). At 676–1254 (KRRRQKIRKY…PEYLGLDVPV (579 aa)) the chain is on the cytoplasmic side. The region spanning 720 to 987 (LRKVKVLGSG…RMARDPQRFV (268 aa)) is the Protein kinase domain. ATP-binding positions include 726 to 734 (LGSGAFGTV) and Lys753. The active-site Proton acceptor is the Asp845. At Tyr877 the chain carries Phosphotyrosine. Disordered stretches follow at residues 1029–1116 (GFFF…SEDP) and 1133–1179 (CSPQ…GKNG). Phosphoserine is present on residues Ser1054, Ser1078, Ser1083, and Ser1107. At Tyr1112 the chain carries Phosphotyrosine. Tyr1139 is subject to Phosphotyrosine; by autocatalysis. Over residues 1146 to 1161 (RPQPPLTPEGPLPPVR) the composition is skewed to pro residues. Residue Thr1166 is modified to Phosphothreonine. Positions 1195-1197 (EYL) are interaction with PIK3C2B. The residue at position 1196 (Tyr1196) is a Phosphotyrosine. Residues 1223-1254 (DQDPSERGSPPNTFEGTPTAENPEYLGLDVPV) form a disordered region. Polar residues predominate over residues 1232–1242 (PPNTFEGTPTA). The residue at position 1247 (Tyr1247) is a Phosphotyrosine; by autocatalysis.

Belongs to the protein kinase superfamily. Tyr protein kinase family. EGF receptor subfamily. As to quaternary structure, homodimer. Heterodimer with EGFR, ERBB3 and ERBB4. Part of a complex with EGFR and either PIK3C2A or PIK3C2B. May interact with PIK3C2B when phosphorylated on Tyr-1196. Interacts with PRKCABP and PLXNB1. Interacts (when phosphorylated on Tyr-1247) with MEMO. Interacts with MUC1. Interacts (when phosphorylated on Tyr-1139) with GRB7 (via SH2 domain). Interacts (when phosphorylated on Tyr-1247) with ERBIN. Interacts with SRC, KPNB1, RANBP2, EEA1, CRM1, CLTC, PTK6, RPA194, MYOC and ACTB. Interacts (preferentially with the tyrosine phosphorylated form) with CPNE3; this interaction occurs at the cell membrane and is increased in a growth factor heregulin-dependent manner. Interacts with HSP90AA1 and HSP90AB1 in an ATP-dependent manner; the interaction suppresses ERBB2 kinase activity. Interacts with SORL1; this interaction regulates ERBB2 subcellular distribution by promoting its recycling after internalization from endosomes back to the plasma membrane, hence stimulates ERBB2-mediated signaling. Interacts with SH3BGRL. Interacts with ROR1. In terms of processing, autophosphorylated. Autophosphorylation occurs in trans, i.e. one subunit of the dimeric receptor phosphorylates tyrosine residues on the other subunit. Ligand-binding increases phosphorylation on tyrosine residues. Signaling via SEMA4C promotes phosphorylation at Tyr-1247. Dephosphorylated by PTPN12.

It localises to the cell membrane. It is found in the cell projection. The protein localises to the ruffle membrane. The protein resides in the early endosome. Its subcellular location is the cytoplasm. It localises to the perinuclear region. It is found in the nucleus. The enzyme catalyses L-tyrosyl-[protein] + ATP = O-phospho-L-tyrosyl-[protein] + ADP + H(+). Functionally, protein tyrosine kinase that is part of several cell surface receptor complexes, but that apparently needs a coreceptor for ligand binding. Essential component of a neuregulin-receptor complex, although neuregulins do not interact with it alone. GP30 is a potential ligand for this receptor. Regulates outgrowth and stabilization of peripheral microtubules (MTs). Upon ERBB2 activation, the MEMO1-RHOA-DIAPH1 signaling pathway elicits the phosphorylation and thus the inhibition of GSK3B at cell membrane. This prevents the phosphorylation of APC and CLASP2, allowing its association with the cell membrane. In turn, membrane-bound APC allows the localization of MACF1 to the cell membrane, which is required for microtubule capture and stabilization. In the nucleus is involved in transcriptional regulation. Associates with the 5'-TCAAATTC-3' sequence in the PTGS2/COX-2 promoter and activates its transcription. Implicated in transcriptional activation of CDKN1A; the function involves STAT3 and SRC. Involved in the transcription of rRNA genes by RNA Pol I and enhances protein synthesis and cell growth. The protein is Receptor tyrosine-protein kinase erbB-2 (ERBB2) of Mesocricetus auratus (Golden hamster).